A 354-amino-acid chain; its full sequence is Guanine nucleotide-binding protein G(o) subunit alpha (354 aa).

Glycine 2 carries N-myristoyl glycine lipidation. Cysteine 3 carries the S-palmitoyl cysteine lipid modification. A G-alpha domain is found at lysine 32–tyrosine 354. The interval lysine 35–threonine 48 is G1 motif. Residues glycine 40–serine 47, leucine 176–threonine 182, aspartate 201–glutamine 205, asparagine 270–aspartate 273, and alanine 326 each bind GTP. 2 residues coordinate Mg(2+): serine 47 and threonine 182. The tract at residues aspartate 174 to threonine 182 is G2 motif. Residues phenylalanine 197 to arginine 206 are G3 motif. The segment at isoleucine 266 to aspartate 273 is G4 motif. The G5 motif stretch occupies residues threonine 324–threonine 329.

The protein belongs to the G-alpha family. G(i/o/t/z) subfamily. G proteins are composed of 3 units; alpha, beta and gamma. The alpha chain contains the guanine nucleotide binding site.

Its function is as follows. Guanine nucleotide-binding proteins (G proteins) are involved as modulators or transducers in various transmembrane signaling systems. The G(o) protein function is not clear. In Lymnaea stagnalis (Great pond snail), this protein is Guanine nucleotide-binding protein G(o) subunit alpha.